We begin with the raw amino-acid sequence, 105 residues long: Malonate decarboxylase acyl carrier protein (105 aa).

S28 is subject to O-(phosphoribosyl dephospho-coenzyme A)serine.

The protein belongs to the MdcC family. Post-translationally, covalently binds the prosthetic group of malonate decarboxylase.

It is found in the cytoplasm. Its function is as follows. Subunit of malonate decarboxylase, it is an acyl carrier protein to which acetyl and malonyl thioester residues are bound via a 2'-(5''-phosphoribosyl)-3'-dephospho-CoA prosthetic group and turn over during the catalytic mechanism. This is Malonate decarboxylase acyl carrier protein from Xanthomonas axonopodis pv. citri (strain 306).